Reading from the N-terminus, the 104-residue chain is Large ribosomal subunit protein uL24 (104 aa).

This sequence belongs to the universal ribosomal protein uL24 family. As to quaternary structure, part of the 50S ribosomal subunit.

Its function is as follows. One of two assembly initiator proteins, it binds directly to the 5'-end of the 23S rRNA, where it nucleates assembly of the 50S subunit. One of the proteins that surrounds the polypeptide exit tunnel on the outside of the subunit. The chain is Large ribosomal subunit protein uL24 from Shewanella loihica (strain ATCC BAA-1088 / PV-4).